A 475-amino-acid chain; its full sequence is 7-dehydrocholesterol reductase (475 aa).

The tract at residues 1–21 (MAAKSQPNIPKAKSLDGVTND) is disordered. A Phosphoserine modification is found at serine 14. 6 consecutive transmembrane segments (helical) span residues 40–60 (LASV…FIMA), 154–174 (THLL…TIIF), 177–197 (WIPL…FAMV), 266–286 (VTNA…DFFW), 306–326 (LGWG…LYLV), and 331–351 (QLST…YYIF). NADP(+) is bound by residues lysine 358, arginine 362, leucine 395, tryptophan 400, and 407 to 408 (NY). Residues 420–440 (LACGGGHLLPYFYIIYMAILL) traverse the membrane as a helical segment. NADP(+) contacts are provided by residues aspartate 447, 451 to 455 (CASKY), and tyrosine 462.

It belongs to the ERG4/ERG24 family. In terms of assembly, interacts with DHCR24; this interaction regulates DHCR7 activity. Interacts with TMEM147. Widely expressed. Most abundant in adrenal gland, liver, testis, and brain.

It localises to the endoplasmic reticulum membrane. The enzyme catalyses cholesterol + NADP(+) = 7-dehydrocholesterol + NADPH + H(+). It catalyses the reaction 7-dehydrodesmosterol + NADPH + H(+) = desmosterol + NADP(+). The catalysed reaction is 5,6alpha-epoxy-5alpha-cholestan-3beta-ol + H2O = 5alpha-cholestane-3beta,5,6beta-triol. It carries out the reaction 5,6beta-epoxy-5beta-cholestan-3beta-ol + H2O = 5alpha-cholestane-3beta,5,6beta-triol. Its pathway is steroid biosynthesis; cholesterol biosynthesis. With respect to regulation, 7-DHC reductase and cholesterol-5,6-epoxide hydrolase (ChEH) activities are inhibited by tamoxifen and the selective AEBS ligand (4-benzyl-phenoxy)-ethyl-N-pyrrolidine (PBPE). ChEH activity is inhibited by oleic acid. Its function is as follows. Oxidoreductase that catalyzes the last step of the cholesterol synthesis pathway, which transforms cholesta-5,7-dien-3beta-ol (7-dehydrocholesterol,7-DHC) into cholesterol by reducing the C7-C8 double bond of its sterol core. Can also metabolize cholesta-5,7,24-trien-3beta-ol (7-dehydrodemosterol, 7-DHD) to desmosterol, which is then metabolized by the Delta(24)-sterol reductase (DHCR24) to cholesterol. Modulates ferroptosis (a form of regulated cell death driven by iron-dependent lipid peroxidation) through the metabolic breakdown of the anti-ferroptotic metabolites 7-DHC and 7-DHD which, when accumulated, divert the propagation of peroxyl radical-mediated damage from phospholipid components to its sterol core, protecting plasma and mitochondrial membranes from phospholipid autoxidation. Component of the microsomal antiestrogen binding site (AEBS), a multiproteic complex at the ER membrane that consists of an association between cholestenol Delta-isomerase/EBP and DHCR7. This complex is responsible for cholesterol-5,6-epoxide hydrolase (ChEH) activity, which consists in the hydration of cholesterol-5,6-epoxides (5,6-EC) into cholestane-3beta,5alpha,6beta-triol (CT). The precise role of each component of this complex has not been described yet. This is 7-dehydrocholesterol reductase from Homo sapiens (Human).